Reading from the N-terminus, the 170-residue chain is Photosystem I assembly protein Ycf3 (170 aa).

TPR repeat units follow at residues 35–68 (AFCYYRDGMSAQSEGEYAEALENYYEALRLEEDP), 72–105 (SYIIYNIGLIYASNGEHIKALEYYHQSLELNPRL), and 120–153 (GLKAADKQDNNMSKSMFDKAAEYWKQAIYLAPNN).

This sequence belongs to the Ycf3 family.

It is found in the plastid. The protein resides in the chloroplast thylakoid membrane. Essential for the assembly of the photosystem I (PSI) complex. May act as a chaperone-like factor to guide the assembly of the PSI subunits. The sequence is that of Photosystem I assembly protein Ycf3 from Gracilaria tenuistipitata var. liui (Red alga).